An 832-amino-acid chain; its full sequence is Protein P (832 aa).

The segment at Met1–Gln177 is terminal protein domain (TP). Positions Glu178–Leu335 are spacer. A disordered region spans residues Ser198 to Cys264. Residues Glu336–Gln679 form a polymerase/reverse transcriptase domain (RT) region. A Reverse transcriptase domain is found at Glu346–Ile589. Residues Asp418, Asp540, and Asp541 each coordinate Mg(2+).

Belongs to the hepadnaviridae P protein family.

It carries out the reaction DNA(n) + a 2'-deoxyribonucleoside 5'-triphosphate = DNA(n+1) + diphosphate. The catalysed reaction is Endonucleolytic cleavage to 5'-phosphomonoester.. Activated by host HSP70 and HSP40 in vitro to be able to bind the epsilon loop of the pgRNA. Because deletion of the RNase H region renders the protein partly chaperone-independent, the chaperones may be needed indirectly to relieve occlusion of the RNA-binding site by this domain. Inhibited by several reverse-transcriptase inhibitors: Lamivudine, Adefovir and Entecavir. Its function is as follows. Multifunctional enzyme that converts the viral RNA genome into dsDNA in viral cytoplasmic capsids. This enzyme displays a DNA polymerase activity that can copy either DNA or RNA templates, and a ribonuclease H (RNase H) activity that cleaves the RNA strand of RNA-DNA heteroduplexes in a partially processive 3'- to 5'-endonucleasic mode. Neo-synthesized pregenomic RNA (pgRNA) are encapsidated together with the P protein, and reverse-transcribed inside the nucleocapsid. Initiation of reverse-transcription occurs first by binding the epsilon loop on the pgRNA genome, and is initiated by protein priming, thereby the 5'-end of (-)DNA is covalently linked to P protein. Partial (+)DNA is synthesized from the (-)DNA template and generates the relaxed circular DNA (RC-DNA) genome. After budding and infection, the RC-DNA migrates in the nucleus, and is converted into a plasmid-like covalently closed circular DNA (cccDNA). The activity of P protein does not seem to be necessary for cccDNA generation, and is presumably released from (+)DNA by host nuclear DNA repair machinery. This is Protein P from Pongo pygmaeus (Bornean orangutan).